We begin with the raw amino-acid sequence, 231 residues long: Homeobox protein EMX1 (231 aa).

The homeobox DNA-binding region spans 133–192 (PKRIRTAFSPSQLLRLERAFEKNHYVVGAERKQLANSLSLSETQVKVWFQNRRTKYKRQK). The disordered stretch occupies residues 193–231 (LEEEGPECTQKKKGNHHINRWRIATKQTGSEDIDVMSDA). Residues 203–212 (KKKGNHHINR) are compositionally biased toward basic residues.

The protein belongs to the EMX homeobox family.

The protein resides in the nucleus. Functionally, may function in combinations with OTX1/2 to specify cell fates in the developing central nervous system. The sequence is that of Homeobox protein EMX1 (emx1) from Danio rerio (Zebrafish).